A 619-amino-acid chain; its full sequence is Dihydroxy-acid dehydratase (619 aa).

Aspartate 80 provides a ligand contact to Mg(2+). Residue cysteine 121 participates in [2Fe-2S] cluster binding. 2 residues coordinate Mg(2+): aspartate 122 and lysine 123. Lysine 123 carries the post-translational modification N6-carboxylysine. Cysteine 196 is a binding site for [2Fe-2S] cluster. Glutamate 492 lines the Mg(2+) pocket. Serine 518 serves as the catalytic Proton acceptor.

The protein belongs to the IlvD/Edd family. Homodimer. [2Fe-2S] cluster is required as a cofactor. Mg(2+) serves as cofactor.

The catalysed reaction is (2R)-2,3-dihydroxy-3-methylbutanoate = 3-methyl-2-oxobutanoate + H2O. The enzyme catalyses (2R,3R)-2,3-dihydroxy-3-methylpentanoate = (S)-3-methyl-2-oxopentanoate + H2O. It functions in the pathway amino-acid biosynthesis; L-isoleucine biosynthesis; L-isoleucine from 2-oxobutanoate: step 3/4. Its pathway is amino-acid biosynthesis; L-valine biosynthesis; L-valine from pyruvate: step 3/4. Functions in the biosynthesis of branched-chain amino acids. Catalyzes the dehydration of (2R,3R)-2,3-dihydroxy-3-methylpentanoate (2,3-dihydroxy-3-methylvalerate) into 2-oxo-3-methylpentanoate (2-oxo-3-methylvalerate) and of (2R)-2,3-dihydroxy-3-methylbutanoate (2,3-dihydroxyisovalerate) into 2-oxo-3-methylbutanoate (2-oxoisovalerate), the penultimate precursor to L-isoleucine and L-valine, respectively. The polypeptide is Dihydroxy-acid dehydratase (Bifidobacterium adolescentis (strain ATCC 15703 / DSM 20083 / NCTC 11814 / E194a)).